Reading from the N-terminus, the 396-residue chain is Putative glycosyltransferase HOC1 (396 aa).

Residues 2 to 13 are Cytoplasmic-facing; the sequence is AKTTKRASSFRR. A helical; Signal-anchor for type II membrane protein membrane pass occupies residues 14-34; that stretch reads LMIFAIIALISLAFGVRYLFH. Residues 35-396 lie on the Lumenal side of the membrane; it reads NSNATDLQKI…WKNTPKVEQK (362 aa). A glycan (N-linked (GlcNAc...) asparagine) is linked at Asn-37.

Belongs to the glycosyltransferase 32 family. In terms of assembly, component of the M-Pol II complex composed of ANP1, MNN9, MNN10, MNN11 and HOC1.

Its subcellular location is the golgi apparatus. It localises to the cis-Golgi network membrane. Its function is as follows. The M-Pol II complex possesses alpha-1,6-mannosyltransferase activity and is probably involved in the elongation of the mannan backbone of N-linked glycans on cell wall and periplasmic proteins. This is Putative glycosyltransferase HOC1 (HOC1) from Saccharomyces cerevisiae (strain ATCC 204508 / S288c) (Baker's yeast).